Consider the following 34-residue polypeptide: Photosystem II reaction center protein Psb30 (34 aa).

The helical transmembrane segment at 6 to 26 threads the bilayer; the sequence is VIGQLLSATLIVLAGPAVIFV.

Belongs to the Psb30/Ycf12 family. In terms of assembly, PSII is composed of 1 copy each of membrane proteins PsbA, PsbB, PsbC, PsbD, PsbE, PsbF, PsbH, PsbI, PsbJ, PsbK, PsbL, PsbM, PsbT, PsbX, PsbY, PsbZ, Psb30/Ycf12, peripheral proteins of the oxygen-evolving complex and a large number of cofactors. It forms dimeric complexes.

It is found in the plastid. The protein resides in the chloroplast thylakoid membrane. A core subunit of photosystem II (PSII), probably helps stabilize the reaction center. This chain is Photosystem II reaction center protein Psb30, found in Heterosigma akashiwo (strain NIES-293 / 8280G21-1).